The following is a 98-amino-acid chain: Ribonuclease kappa (98 aa).

2 helical membrane passes run 13–33 (ACGIVLSAWGVIMLIMLGIFF) and 65–85 (VSYNCFIAASLYLLLGGFSFC).

It belongs to the RNase K family. As to quaternary structure, interacts with the proton translocation complex V0 of the V-ATPase. Interacts with ATP6AP1. Expressed in brain (at protein level).

The protein resides in the endomembrane system. It is found in the cytoplasmic vesicle. Its subcellular location is the clathrin-coated vesicle membrane. Its function is as follows. Endoribonuclease which preferentially cleaves ApU and ApG phosphodiester bonds. Hydrolyzes UpU bonds at a lower rate. Regulates the activity of vacuolar (H+)-ATPase (V-ATPase) which is responsible for acidifying and maintaining the pH of intracellular compartments. Required at an early stage of receptor-mediated endocytosis. The polypeptide is Ribonuclease kappa (RNASEK) (Bos taurus (Bovine)).